Reading from the N-terminus, the 252-residue chain is Protein BTG3 (252 aa).

The segment at 138 to 163 (VTSDYHSGSSSSDEDTSKEVDVKPSS) is disordered.

It belongs to the BTG family. In terms of tissue distribution, ubiquitous.

Its function is as follows. Overexpression impairs serum-induced cell cycle progression from the G0/G1 to S phase. The polypeptide is Protein BTG3 (Btg3) (Mus musculus (Mouse)).